A 588-amino-acid chain; its full sequence is NADP-dependent malic enzyme 2 (588 aa).

Positions 1-21 (MGSTPTDLPGEDVADNRSGVG) are disordered. At Gly-2 the chain carries N-acetylglycine. The active-site Proton donor is Tyr-136. Residue Arg-189 coordinates NADP(+). Lys-207 acts as the Proton acceptor in catalysis. A divalent metal cation contacts are provided by Glu-279, Asp-280, and Asp-303. Residues Asp-303, 332–348 (LFLGAGEAGTGIAELIA), and Asn-444 each bind NADP(+).

The protein belongs to the malic enzymes family. Homohexamers and homooctamers. Mg(2+) serves as cofactor. The cofactor is Mn(2+). As to expression, expressed in leaves, stems, flowers and roots. Particularly present in vasculatures, trichome basal cells and hydatodes.

Its subcellular location is the cytoplasm. The enzyme catalyses (S)-malate + NADP(+) = pyruvate + CO2 + NADPH. It catalyses the reaction oxaloacetate + H(+) = pyruvate + CO2. Activated by coenzyme A (CoA), aspartate, succinate and fumarate. Repressed by oxaloacetate, glucose and ATP. This chain is NADP-dependent malic enzyme 2 (NADP-ME2), found in Arabidopsis thaliana (Mouse-ear cress).